The sequence spans 413 residues: Peptidase T (413 aa).

Histidine 84 lines the Zn(2+) pocket. Aspartate 86 is a catalytic residue. Aspartate 146 serves as a coordination point for Zn(2+). Glutamate 180 acts as the Proton acceptor in catalysis. Glutamate 181, aspartate 203, and histidine 385 together coordinate Zn(2+).

The protein belongs to the peptidase M20B family. Zn(2+) serves as cofactor.

It localises to the cytoplasm. The catalysed reaction is Release of the N-terminal residue from a tripeptide.. In terms of biological role, cleaves the N-terminal amino acid of tripeptides. This Limosilactobacillus fermentum (strain NBRC 3956 / LMG 18251) (Lactobacillus fermentum) protein is Peptidase T.